Consider the following 664-residue polypeptide: RNA-binding protein RMD9, mitochondrial (664 aa).

The N-terminal 32 residues, 1 to 32 (MFRLVQQQTLKSRVPNQFVSASRNSLNSQFRF), are a transit peptide targeting the mitochondrion. Positions 38-68 (LERNPQQDPTTAAPAKSSSDKRNSKKKYENN) are disordered. Over residues 55–68 (SSDKRNSKKKYENN) the composition is skewed to basic and acidic residues.

Belongs to the RMD9 family. Monomer. In terms of processing, phosphorylated. Phosphorylation promotes binding to RNA.

Its subcellular location is the mitochondrion inner membrane. In terms of biological role, binds the 3'-UTR of mitochondrial mRNAs. Involved in the processing or stability of mitochondrial mRNAs. The polypeptide is RNA-binding protein RMD9, mitochondrial (RMD9) (Kluyveromyces lactis (strain ATCC 8585 / CBS 2359 / DSM 70799 / NBRC 1267 / NRRL Y-1140 / WM37) (Yeast)).